The chain runs to 1049 residues: FERM, ARHGEF and pleckstrin domain-containing protein 1 (1049 aa).

Residues 1-37 (MGEIEQKPTPASRLGAPENSGISTLERGQKPPPTPSG) form a disordered region. A phosphoserine mark is found at serine 20 and serine 23. Threonine 24 bears the Phosphothreonine mark. One can recognise an FERM domain in the interval 40–320 (MTVKIQMLDD…EHHAFFRLFE (281 aa)). A phosphoserine mark is found at serine 340, serine 373, serine 389, serine 403, serine 427, serine 433, and serine 437. The interval 361–537 (FERKHSKIHS…TDDEEEGRRK (177 aa)) is disordered. Polar residues-rich tracts occupy residues 371 to 395 (TRSLVSQPTAPNSEVPKQSPQSASL) and 402 to 412 (ESPSAQSCQQA). The segment covering 435-448 (SGSKAADGTAAAAP) has biased composition (low complexity). Polar residues-rich tracts occupy residues 473–492 (STGSLTGSPHLSELSINSQG) and 499–514 (VTLSPNLSPDNKQASP). Serine 513 and serine 517 each carry phosphoserine. In terms of domain architecture, DH spans 543–734 (KAYYIAKEVS…TEMVAQLHGT (192 aa)). A PH 1 domain is found at 763–860 (EFIRLGSLSK…WLEDIQMAID (98 aa)). 3 positions are modified to phosphoserine: serine 837, serine 876, and serine 882. Residues 866-908 (NGPTPELLASSPPDNKSPDEATAADQESEDDLSASRTSLERQA) are disordered. Threonine 887 bears the Phosphothreonine mark. Phosphoserine occurs at positions 893, 900, and 903. One can recognise a PH 2 domain in the interval 936-1033 (ENQLSGNLLR…WMEVIRSATS (98 aa)).

Interacts with CADM1. Interacts with RAC1. In terms of tissue distribution, detected in forbrain (at protein level).

It is found in the cell membrane. Its subcellular location is the synapse. The protein localises to the synaptosome. It localises to the cytoplasm. The protein resides in the cytosol. It is found in the cell projection. Its subcellular location is the filopodium. The protein localises to the dendrite. It localises to the dendritic spine. In terms of biological role, may play a role in semaphorin signaling. Functions as a guanine nucleotide exchange factor for RAC1. Plays a role in the assembly and disassembly of dendritic filopodia, the formation of dendritic spines, regulation of dendrite length and ultimately the formation of synapses. This chain is FERM, ARHGEF and pleckstrin domain-containing protein 1 (Farp1), found in Rattus norvegicus (Rat).